A 299-amino-acid chain; its full sequence is Acetylglutamate kinase (299 aa).

Substrate is bound by residues 70–71, arginine 92, and asparagine 186; that span reads GG.

The protein belongs to the acetylglutamate kinase family. ArgB subfamily.

The protein resides in the cytoplasm. The catalysed reaction is N-acetyl-L-glutamate + ATP = N-acetyl-L-glutamyl 5-phosphate + ADP. It functions in the pathway amino-acid biosynthesis; L-arginine biosynthesis; N(2)-acetyl-L-ornithine from L-glutamate: step 2/4. Functionally, catalyzes the ATP-dependent phosphorylation of N-acetyl-L-glutamate. The protein is Acetylglutamate kinase of Petrotoga mobilis (strain DSM 10674 / SJ95).